Reading from the N-terminus, the 310-residue chain is tRNA dimethylallyltransferase (310 aa).

Residue 10-17 coordinates ATP; that stretch reads GPTAVGKS. Substrate is bound at residue 12-17; that stretch reads TAVGKS. 3 interaction with substrate tRNA regions span residues 35–38, 159–163, and 274–281; these read DSAQ, QRIQR, and KRQITWLR.

This sequence belongs to the IPP transferase family. In terms of assembly, monomer. Mg(2+) serves as cofactor.

The enzyme catalyses adenosine(37) in tRNA + dimethylallyl diphosphate = N(6)-dimethylallyladenosine(37) in tRNA + diphosphate. Its function is as follows. Catalyzes the transfer of a dimethylallyl group onto the adenine at position 37 in tRNAs that read codons beginning with uridine, leading to the formation of N6-(dimethylallyl)adenosine (i(6)A). In Halorhodospira halophila (strain DSM 244 / SL1) (Ectothiorhodospira halophila (strain DSM 244 / SL1)), this protein is tRNA dimethylallyltransferase.